Consider the following 577-residue polypeptide: Moesin (577 aa).

The FERM domain maps to proline 2 to arginine 295. Serine 74 is modified (phosphoserine). At lysine 79 the chain carries N6-acetyllysine. Lysine 83 carries the post-translational modification N6-succinyllysine. The short motif at isoleucine 115–glutamate 120 is the [IL]-x-C-x-x-[DE] motif element. The residue at position 116 (tyrosine 116) is a Phosphotyrosine. Cysteine 117 is subject to S-nitrosocysteine. N6-acetyllysine is present on residues lysine 139 and lysine 165. A compositionally biased stretch (basic and acidic residues) spans leucine 375 to glutamate 401. Disordered regions lie at residues leucine 375–aspartate 409 and alanine 466–valine 518. Serine 407 bears the Phosphoserine mark. Over residues alanine 476–glycine 487 the composition is skewed to acidic residues. Over residues alanine 492–valine 518 the composition is skewed to basic and acidic residues. Serine 527 carries the post-translational modification Phosphoserine. At threonine 558 the chain carries Phosphothreonine; by ROCK2 and STK10.

In resting T-cells, part of a PAG1-NHERF1-MSN complex which is disrupted upon TCR activation. Interacts with NHERF1. Interacts with PPP1R16B. Interacts with PDZD8. Interacts with SELPLG and SYK; these interactions mediate the activation of SYK by SELPLG. Interacts with PDPN (via cytoplasmic domain); this interaction activates RHOA and promotes epithelial-mesenchymal transition. Interacts with SPN/CD43 cytoplasmic tail. Interacts with CD44. Interacts with ICAM2. Interacts with ICAM3 (via C-terminus). Interacts with PDZD8. Interacts with F-actin. Interacts with CD46. Interacts with PTPN6. In terms of processing, phosphorylation on Thr-558 is crucial for the formation of microvilli-like structures. Phosphorylation by ROCK2 suppresses the head-to-tail association of the N-terminal and C-terminal halves resulting in an opened conformation which is capable of actin and membrane-binding. Phosphorylation on Thr-558 by STK10 negatively regulates lymphocyte migration and polarization. Post-translationally, S-nitrosylation of Cys-117 is induced by interferon-gamma and oxidatively-modified low-densitity lipoprotein (LDL(ox)) implicating the iNOS-S100A8/9 transnitrosylase complex.

The protein resides in the cell membrane. It localises to the cytoplasm. Its subcellular location is the cytoskeleton. The protein localises to the apical cell membrane. It is found in the cell projection. The protein resides in the microvillus membrane. It localises to the microvillus. Its activity is regulated as follows. A head-to-tail association, of the N-terminal and C-terminal halves results in a closed conformation (inactive form) which is incapable of actin or membrane-binding. In terms of biological role, ezrin-radixin-moesin (ERM) family protein that connects the actin cytoskeleton to the plasma membrane and thereby regulates the structure and function of specific domains of the cell cortex. Tethers actin filaments by oscillating between a resting and an activated state providing transient interactions between moesin and the actin cytoskeleton. Once phosphorylated on its C-terminal threonine, moesin is activated leading to interaction with F-actin and cytoskeletal rearrangement. These rearrangements regulate many cellular processes, including cell shape determination, membrane transport, and signal transduction. The role of moesin is particularly important in immunity acting on both T and B-cells homeostasis and self-tolerance, regulating lymphocyte egress from lymphoid organs. Modulates phagolysosomal biogenesis in macrophages. Participates also in immunologic synapse formation. This is Moesin from Bos taurus (Bovine).